The following is a 547-amino-acid chain: Glucose-6-phosphate isomerase (547 aa).

The Proton donor role is filled by Glu-351. Active-site residues include His-382 and Lys-509.

It belongs to the GPI family.

It is found in the cytoplasm. The enzyme catalyses alpha-D-glucose 6-phosphate = beta-D-fructose 6-phosphate. Its pathway is carbohydrate biosynthesis; gluconeogenesis. It participates in carbohydrate degradation; glycolysis; D-glyceraldehyde 3-phosphate and glycerone phosphate from D-glucose: step 2/4. In terms of biological role, catalyzes the reversible isomerization of glucose-6-phosphate to fructose-6-phosphate. The chain is Glucose-6-phosphate isomerase from Coxiella burnetii (strain CbuK_Q154) (Coxiella burnetii (strain Q154)).